The primary structure comprises 311 residues: Olfactory receptor 8H1 (311 aa).

The Extracellular portion of the chain corresponds to 1–25; it reads MGRRNNTNVPDFILTGLSDSEEVQM. Residue Asn5 is glycosylated (N-linked (GlcNAc...) asparagine). Residues 26 to 46 form a helical membrane-spanning segment; it reads ALFILFLLIYLITMLGNVGMI. At 47–54 the chain is on the cytoplasmic side; sequence LIIRLDLQ. A helical transmembrane segment spans residues 55–75; sequence LHTPMYFFLTHLSFIDLSYST. Over 76-98 the chain is Extracellular; it reads VITPKTLANLLTSNYISFMGCFA. An intrachain disulfide couples Cys96 to Cys188. Residues 99–119 form a helical membrane-spanning segment; that stretch reads QMFFFVFLGAAECFLLSSMAY. At 120–138 the chain is on the cytoplasmic side; that stretch reads DRYVAICSPLRYPVIMSKR. Residues 139–159 form a helical membrane-spanning segment; that stretch reads LCCALVTGPYVISFINSFVNV. Residues 160-196 lie on the Extracellular side of the membrane; it reads VWMSRLHFCDSNVVRHFFCDTSPILALSCMDTYDIEI. A helical membrane pass occupies residues 197-216; the sequence is MIHILAGSTLMVSLITISAS. Residues 217 to 236 are Cytoplasmic-facing; the sequence is YVSILSTILKINSTSGKQKA. Residues 237–257 form a helical membrane-spanning segment; that stretch reads LSTCASHLLGVTIFYGTMIFT. Residues 258-270 lie on the Extracellular side of the membrane; the sequence is YLKPRKSYSLGRD. The chain crosses the membrane as a helical span at residues 271–291; the sequence is QVASVFYTIVIPMLNPLIYSL. At 292-311 the chain is on the cytoplasmic side; it reads RNKEVKNALIRVMQRRQDSR.

It belongs to the G-protein coupled receptor 1 family.

It localises to the cell membrane. Its function is as follows. Odorant receptor. This chain is Olfactory receptor 8H1 (OR8H1), found in Homo sapiens (Human).